Reading from the N-terminus, the 312-residue chain is Acetyl-coenzyme A carboxylase carboxyl transferase subunit alpha (312 aa).

Residues 36-286 (NLEKEISKTY…ADYVKKSLNE (251 aa)) form the CoA carboxyltransferase C-terminal domain.

The protein belongs to the AccA family. In terms of assembly, acetyl-CoA carboxylase is a heterohexamer composed of biotin carboxyl carrier protein (AccB), biotin carboxylase (AccC) and two subunits each of ACCase subunit alpha (AccA) and ACCase subunit beta (AccD).

It localises to the cytoplasm. The enzyme catalyses N(6)-carboxybiotinyl-L-lysyl-[protein] + acetyl-CoA = N(6)-biotinyl-L-lysyl-[protein] + malonyl-CoA. It functions in the pathway lipid metabolism; malonyl-CoA biosynthesis; malonyl-CoA from acetyl-CoA: step 1/1. Its function is as follows. Component of the acetyl coenzyme A carboxylase (ACC) complex. First, biotin carboxylase catalyzes the carboxylation of biotin on its carrier protein (BCCP) and then the CO(2) group is transferred by the carboxyltransferase to acetyl-CoA to form malonyl-CoA. This is Acetyl-coenzyme A carboxylase carboxyl transferase subunit alpha from Campylobacter jejuni (strain RM1221).